A 138-amino-acid polypeptide reads, in one-letter code: Putative pre-16S rRNA nuclease (138 aa).

Belongs to the YqgF nuclease family.

It localises to the cytoplasm. Functionally, could be a nuclease involved in processing of the 5'-end of pre-16S rRNA. The polypeptide is Putative pre-16S rRNA nuclease (Escherichia fergusonii (strain ATCC 35469 / DSM 13698 / CCUG 18766 / IAM 14443 / JCM 21226 / LMG 7866 / NBRC 102419 / NCTC 12128 / CDC 0568-73)).